We begin with the raw amino-acid sequence, 356 residues long: Glutamine synthetase cytosolic isozyme 2 (356 aa).

The region spanning I19–G99 is the GS beta-grasp domain. A GS catalytic domain is found at K106 to P356.

This sequence belongs to the glutamine synthetase family. Homooctamer.

The protein localises to the cytoplasm. The enzyme catalyses L-glutamate + NH4(+) + ATP = L-glutamine + ADP + phosphate + H(+). This is Glutamine synthetase cytosolic isozyme 2 (GS1-2) from Vitis vinifera (Grape).